Reading from the N-terminus, the 1484-residue chain is Chromosome partition protein MukB (1484 aa).

An ATP-binding site is contributed by 34–41; that stretch reads GGNGAGKS. Coiled coils occupy residues 326–418, 444–472, and 509–602; these read LEAD…QYNQ, LDTF…QTAH, and RHLA…QRAP. Residues 666 to 783 are flexible hinge; sequence PGGAEDQRLN…SLPIFGRAAR (118 aa). 3 coiled-coil regions span residues 835-923, 977-1116, and 1209-1265; these read EAEI…AKLE, EMLS…AKAG, and VEAI…LQSV. The disordered stretch occupies residues 1049–1074; that stretch reads ADSGAEERARQRRDELHAQLSNNRSR. The span at 1051–1065 shows a compositional bias: basic and acidic residues; sequence SGAEERARQRRDELH.

The protein belongs to the SMC family. MukB subfamily. As to quaternary structure, homodimerization via its hinge domain. Binds to DNA via its C-terminal region. Interacts, and probably forms a ternary complex, with MukE and MukF via its C-terminal region. The complex formation is stimulated by calcium or magnesium. Interacts with tubulin-related protein FtsZ.

It localises to the cytoplasm. The protein localises to the nucleoid. Plays a central role in chromosome condensation, segregation and cell cycle progression. Functions as a homodimer, which is essential for chromosome partition. Involved in negative DNA supercoiling in vivo, and by this means organize and compact chromosomes. May achieve or facilitate chromosome segregation by condensation DNA from both sides of a centrally located replisome during cell division. In Salmonella dublin (strain CT_02021853), this protein is Chromosome partition protein MukB.